A 306-amino-acid polypeptide reads, in one-letter code: Glutaminase (306 aa).

Residues Ser-64, Asn-115, Glu-159, Asn-166, Tyr-190, Tyr-242, and Val-260 each contribute to the substrate site.

This sequence belongs to the glutaminase family. As to quaternary structure, homotetramer.

The enzyme catalyses L-glutamine + H2O = L-glutamate + NH4(+). The chain is Glutaminase from Aliivibrio fischeri (strain MJ11) (Vibrio fischeri).